A 148-amino-acid polypeptide reads, in one-letter code: Probable histone H2B.2 (148 aa).

Positions 1 to 32 (MAPKGEKKPAEKKPAEEKKSTVAEKAPAEKKP) are enriched in basic and acidic residues. Positions 1–57 (MAPKGEKKPAEKKPAEEKKSTVAEKAPAEKKPKAGKKLPKEGGSAAGEKKKKRSKKS) are disordered. N6-acetyllysine occurs at positions 7, 36, and 37. Residue Lys144 forms a Glycyl lysine isopeptide (Lys-Gly) (interchain with G-Cter in ubiquitin) linkage.

It belongs to the histone H2B family. The nucleosome is a histone octamer containing two molecules each of H2A, H2B, H3 and H4 assembled in one H3-H4 heterotetramer and two H2A-H2B heterodimers. The octamer wraps approximately 147 bp of DNA. In terms of processing, can be acetylated to form H2BK6ac, H2BK33ac and H2BK34ac. Monoubiquitinated to form H2BK143ub1; may give a specific tag for epigenetic transcriptional activation.

The protein localises to the nucleus. Its subcellular location is the chromosome. In terms of biological role, core component of nucleosome. Nucleosomes wrap and compact DNA into chromatin, limiting DNA accessibility to the cellular machineries which require DNA as a template. Histones thereby play a central role in transcription regulation, DNA repair, DNA replication and chromosomal stability. DNA accessibility is regulated via a complex set of post-translational modifications of histones, also called histone code, and nucleosome remodeling. In Medicago truncatula (Barrel medic), this protein is Probable histone H2B.2.